The following is a 994-amino-acid chain: ASI1-immunoprecipitated protein 2 (994 aa).

2 disordered regions span residues 39–182 and 187–206; these read AEFS…SGEN and KADE…NDPE. The segment covering 45-54 has biased composition (basic and acidic residues); the sequence is KSDESSDENS. Positions 60-102 are enriched in polar residues; it reads SQCSFNGDNLLRSSGVNAPGSSHNTSSEASHLVNSNHDTSSEN. 2 stretches are compositionally biased toward basic and acidic residues: residues 119–140 and 148–163; these read LLDR…DHQA and KVKE…EKKN. A PHD-type zinc finger spans residues 212 to 263; sequence VKVCDTCGDAGREDLLAICSRCSDGAEHTYCMRVMLKKVPKGYWLCEECKFA. Positions 215, 218, 230, 233, 239, 242, 257, and 260 each coordinate Zn(2+). Disordered stretches follow at residues 342–567 and 839–875; these read AHYS…NNKG and CSNP…TDRT. Residues 371-384 are compositionally biased toward low complexity; that stretch reads SFLKSNSFNSLSSR. Polar residues-rich tracts occupy residues 417–435 and 449–464; these read VGKS…NCND and TEAN…NSSI. Basic and acidic residues-rich tracts occupy residues 469–478, 536–552, and 858–875; these read SPRDLKDLQS, PRSR…KDAV, and DTFR…TDRT.

In terms of assembly, component of the ASI1-AIPP1-EDM2 (AAE) RNA regulatory complex composed of at least AIPP1/EDM3, ASI1 and EDM2 and may contain CPL2, AIPP2 and AIPP3/BDT1. Part of the BAH-PHD bivalent histone reader complex that contains AIPP2, PAIPP2 and AIPP3/BDT1; the BAH-PHD module associates with CPL2 to form the BAH-PHD-CPL2 complex (BPC) for transcriptional repression. Binds directly to ASI1, AIPP3/BDT1 and CPL2 but not to PAIPP2. As to expression, expressed ubiquitously.

Its function is as follows. Together with AIPP3/BDT1 and PAIPP2, cooperates to form a BAH-PHD bivalent histone reader complex able to read histone H3 lysine 27 trimethylation (H3K27me3) and low-methylated H3K4 histone marks in order to regulate transcription, especially to prevent early flowering; promotes AIPP3/BDT1 binding to H3K27me3. CPL2 is subsequently recruited to form a BAH-PHD-CPL2 complex (BPC) in order to silence several H3K27me3 and low-methylated H3K4 enriched loci, including AGO5, via the phosphorylation state-dependent inhibition of Pol II release from the transcriptional start site (e.g. Ser5P-Pol II dephosphorylation). The BPC complex represses flowering by inhibiting the expression of several genes, including AGL6, FT, FUL and SOC1. Prevents the accumulation of intronic heterochromatin-containing genes (e.g. IBM1, At3g05410 and RPP7). This Arabidopsis thaliana (Mouse-ear cress) protein is ASI1-immunoprecipitated protein 2.